A 202-amino-acid polypeptide reads, in one-letter code: Casparian strip membrane protein 1 (202 aa).

Topologically, residues 1–42 (MEKNKSTAIEIAESSKESKGKAPLLAAAVGHDRAAGYKRGVS) are cytoplasmic. The chain crosses the membrane as a helical span at residues 43-63 (IFDLFLRISAATAALAATIVM). Topologically, residues 64-90 (GTTEQTLPFFTQFFQFRAQYDDLPTFT) are extracellular. A helical transmembrane segment spans residues 91–111 (FFVVGMAIVTGYLILSVPFSI). Topologically, residues 112–130 (VCIARPVAIGPRFLLIVGD) are cytoplasmic. Residues 131–151 (TLKAVLATSAAGSSAAIVYLA) traverse the membrane as a helical segment. Residues 152–173 (HNGNSDANWLDICQQFNDFCQR) lie on the Extracellular side of the membrane. A helical membrane pass occupies residues 174–194 (VSGAVVAAFVAVVLLIFLIVL). The Cytoplasmic segment spans residues 195 to 202 (SAMALRKN).

This sequence belongs to the Casparian strip membrane proteins (CASP) family. Homodimer and heterodimers.

The protein resides in the cell membrane. Functionally, regulates membrane-cell wall junctions and localized cell wall deposition. Required for establishment of the Casparian strip membrane domain (CSD) and the subsequent formation of Casparian strips, a cell wall modification of the root endodermis that determines an apoplastic barrier between the intraorganismal apoplasm and the extraorganismal apoplasm and prevents lateral diffusion. The sequence is that of Casparian strip membrane protein 1 from Striga hermonthica (Purple witchweed).